A 559-amino-acid polypeptide reads, in one-letter code: Palmitoyltransferase AKR1 (559 aa).

3 ANK repeats span residues 8–38, 42–71, and 75–104; these read QGFN…PVDT, LGHT…RVDT, and EGFT…DIKA. A run of 3 helical transmembrane segments spans residues 148-168, 192-212, and 217-237; these read LMVL…FLFG, TAVF…YLLG, and LLWM…FFYG. A DHHC domain is found at 272-322; the sequence is HFCVSCIAQRPLRSKHCKFCNRCVAKFDHHCPWIYNCIGAKNHRAFLIFLA. Cys302 (S-palmitoyl cysteine intermediate) is an active-site residue. Helical transmembrane passes span 316–336 and 373–393; these read AFLI…YLSF and LAFW…VQLY.

The protein belongs to the DHHC palmitoyltransferase family. AKR/ZDHHC17 subfamily.

Its subcellular location is the early endosome membrane. It is found in the golgi apparatus membrane. It carries out the reaction L-cysteinyl-[protein] + hexadecanoyl-CoA = S-hexadecanoyl-L-cysteinyl-[protein] + CoA. Its function is as follows. Palmitoyltransferase specific for casein kinase 1. The polypeptide is Palmitoyltransferase AKR1 (Mortierella alpina (Oleaginous fungus)).